Reading from the N-terminus, the 685-residue chain is T-box transcription factor TBX2 (685 aa).

The T-box DNA-binding region spans 104–277 (LWDQFHKLGT…NNPFAKGFRD (174 aa)). 2 disordered regions span residues 270-433 (PFAK…CGSL) and 606-660 (NLLT…SINE). Basic and acidic residues-rich tracts occupy residues 296–308 (MYEEQCKADRDGA), 340–361 (SNREEKFGADSDQELDRREVRT), 378–403 (RLEDRGKDKNTPEKKSESPESRKDGG), and 410–428 (SLEKDKGESRRKEDSKSDP). A compositionally biased stretch (polar residues) spans 606 to 617 (NLLTTGLSASLN). Low complexity predominate over residues 618 to 633 (PGSESSKPGSSRESSP). The stretch at 652 to 676 (ASMKDSINELQNIQRLVSGLESQRE) forms a coiled coil.

As to quaternary structure, binds DNA as a monomer.

It is found in the nucleus. Functionally, transcription factor which acts as a transcriptional repressor. May also function as a transcriptional activator. Binds to the palindromic T site 5'-TTCACACCTAGGTGTGAA-3' DNA sequence, or a half-site, which are present in the regulatory region of several genes. The protein is T-box transcription factor TBX2 (tbx2) of Xenopus tropicalis (Western clawed frog).